The chain runs to 251 residues: Adenosylcobinamide-GDP ribazoletransferase (251 aa).

5 helical membrane passes run 44 to 64, 114 to 134, 143 to 163, 177 to 197, and 198 to 218; these read LVGL…LLAG, IGAF…VLAH, GALV…AACV, AGAT…TGVA, and LAGP…VVWL.

It belongs to the CobS family. The cofactor is Mg(2+).

Its subcellular location is the cell inner membrane. It catalyses the reaction alpha-ribazole + adenosylcob(III)inamide-GDP = adenosylcob(III)alamin + GMP + H(+). It carries out the reaction alpha-ribazole 5'-phosphate + adenosylcob(III)inamide-GDP = adenosylcob(III)alamin 5'-phosphate + GMP + H(+). The protein operates within cofactor biosynthesis; adenosylcobalamin biosynthesis; adenosylcobalamin from cob(II)yrinate a,c-diamide: step 7/7. In terms of biological role, joins adenosylcobinamide-GDP and alpha-ribazole to generate adenosylcobalamin (Ado-cobalamin). Also synthesizes adenosylcobalamin 5'-phosphate from adenosylcobinamide-GDP and alpha-ribazole 5'-phosphate. The protein is Adenosylcobinamide-GDP ribazoletransferase of Nitratidesulfovibrio vulgaris (strain DSM 19637 / Miyazaki F) (Desulfovibrio vulgaris).